The chain runs to 283 residues: 2-dehydro-3-deoxyphosphooctonate aldolase (283 aa).

The protein belongs to the KdsA family.

The protein resides in the cytoplasm. It catalyses the reaction D-arabinose 5-phosphate + phosphoenolpyruvate + H2O = 3-deoxy-alpha-D-manno-2-octulosonate-8-phosphate + phosphate. The protein operates within carbohydrate biosynthesis; 3-deoxy-D-manno-octulosonate biosynthesis; 3-deoxy-D-manno-octulosonate from D-ribulose 5-phosphate: step 2/3. It functions in the pathway bacterial outer membrane biogenesis; lipopolysaccharide biosynthesis. This Prochlorococcus marinus (strain MIT 9313) protein is 2-dehydro-3-deoxyphosphooctonate aldolase.